A 278-amino-acid polypeptide reads, in one-letter code: Formamidopyrimidine-DNA glycosylase (278 aa).

Proline 2 acts as the Schiff-base intermediate with DNA in catalysis. Catalysis depends on glutamate 3, which acts as the Proton donor. Lysine 59 (proton donor; for beta-elimination activity) is an active-site residue. DNA is bound by residues histidine 93, arginine 112, and arginine 153. The FPG-type zinc-finger motif lies at 238 to 272 (NVYDRAGEPCPRCQSTIERIVVAQRSTYFCPTCQI). The active-site Proton donor; for delta-elimination activity is arginine 262.

This sequence belongs to the FPG family. As to quaternary structure, monomer. It depends on Zn(2+) as a cofactor.

It carries out the reaction Hydrolysis of DNA containing ring-opened 7-methylguanine residues, releasing 2,6-diamino-4-hydroxy-5-(N-methyl)formamidopyrimidine.. The catalysed reaction is 2'-deoxyribonucleotide-(2'-deoxyribose 5'-phosphate)-2'-deoxyribonucleotide-DNA = a 3'-end 2'-deoxyribonucleotide-(2,3-dehydro-2,3-deoxyribose 5'-phosphate)-DNA + a 5'-end 5'-phospho-2'-deoxyribonucleoside-DNA + H(+). In terms of biological role, involved in base excision repair of DNA damaged by oxidation or by mutagenic agents. Acts as a DNA glycosylase that recognizes and removes damaged bases. Has a preference for oxidized purines, such as 7,8-dihydro-8-oxoguanine (8-oxoG). Has AP (apurinic/apyrimidinic) lyase activity and introduces nicks in the DNA strand. Cleaves the DNA backbone by beta-delta elimination to generate a single-strand break at the site of the removed base with both 3'- and 5'-phosphates. This Chloroflexus aurantiacus (strain ATCC 29366 / DSM 635 / J-10-fl) protein is Formamidopyrimidine-DNA glycosylase.